A 572-amino-acid chain; its full sequence is Triacylglycerol lipase OBL1 (572 aa).

Residues 110–130 (GYLVEFFLNLFSLNGNFLGLL) traverse the membrane as a helical segment. Positions 320-356 (IPPSESSKSSTSFSDSDAHTGSDLSSDSERPTDTRKK) are disordered. Over residues 323–334 (SESSKSSTSFSD) the composition is skewed to low complexity. Residues 346-356 (DSERPTDTRKK) are compositionally biased toward basic and acidic residues. The GXSXG motif lies at 391-395 (GHSLG). Residue S393 is the Nucleophile of the active site. Catalysis depends on charge relay system residues D457 and H550.

The protein belongs to the AB hydrolase superfamily. Lipase family. In terms of tissue distribution, expressed in pollen grains and pollen tubes.

It is found in the lipid droplet. The protein resides in the membrane. The catalysed reaction is 1,2-di-(9Z-octadecenoyl)-glycerol + (9Z)-octadecenoate + H(+) = 1,2,3-tri-(9Z-octadecenoyl)-glycerol + H2O. It catalyses the reaction 1-(9Z-octadecenoyl)-glycerol + H2O = glycerol + (9Z)-octadecenoate + H(+). Acid lipase that can hydrolyze a range of triacylglycerols without a clear preference for acyl-chains. Can also cleave 1,2-diacylglycerol, 1,3-diacylglycerol and 1-monoacylglycerol, but not phosphatidylcholine, phosphatidylethanolamine, or sterol esters. Required for pollen tube growth. Triacylglycerol hydrolysis by OBL1 may provide acyl groups for the synthesis of membrane lipids in growing pollen tubes. This Nicotiana tabacum (Common tobacco) protein is Triacylglycerol lipase OBL1.